The chain runs to 488 residues: Beta-xylosidase (488 aa).

The active-site Proton donor is Glu163. Catalysis depends on Glu275, which acts as the Nucleophile.

This sequence belongs to the glycosyl hydrolase 39 family.

It carries out the reaction Hydrolysis of (1-&gt;4)-beta-D-xylans, to remove successive D-xylose residues from the non-reducing termini.. Functionally, beta-xylosidase is an intracellular xylan-degrading enzyme. The polypeptide is Beta-xylosidase (xynB) (Caldicellulosiruptor saccharolyticus (Caldocellum saccharolyticum)).